A 351-amino-acid polypeptide reads, in one-letter code: Phospho-N-acetylmuramoyl-pentapeptide-transferase (351 aa).

Helical transmembrane passes span 17–37 (MAYATIFAFLLSLIVGPHIIL), 62–82 (GIPTMGGILIFFCVFISLVFW), 85–105 (ILNVYFLIIVFVMFGFAFLGF), 130–150 (IIFSFISVSILYYLGGEHVSI), 163–183 (LGVFYIPFGMFILIAASNSFN), 190–210 (GLAIGLSIVITGALIIIAYIT), 230–250 (LVIFLGALLGGSFGFLWFNAY), 254–274 (IMMGDTGSLALGAILGMTALI), 281–301 (FSILAGVFIIETMSVIIQVIV), and 328–348 (QVVIRFWIIGLIFAIIALSTI).

Belongs to the glycosyltransferase 4 family. MraY subfamily. Requires Mg(2+) as cofactor.

It localises to the cell inner membrane. The catalysed reaction is UDP-N-acetyl-alpha-D-muramoyl-L-alanyl-gamma-D-glutamyl-meso-2,6-diaminopimeloyl-D-alanyl-D-alanine + di-trans,octa-cis-undecaprenyl phosphate = di-trans,octa-cis-undecaprenyl diphospho-N-acetyl-alpha-D-muramoyl-L-alanyl-D-glutamyl-meso-2,6-diaminopimeloyl-D-alanyl-D-alanine + UMP. Its pathway is cell wall biogenesis; peptidoglycan biosynthesis. Functionally, catalyzes the initial step of the lipid cycle reactions in the biosynthesis of the cell wall peptidoglycan: transfers peptidoglycan precursor phospho-MurNAc-pentapeptide from UDP-MurNAc-pentapeptide onto the lipid carrier undecaprenyl phosphate, yielding undecaprenyl-pyrophosphoryl-MurNAc-pentapeptide, known as lipid I. This Borreliella afzelii (strain PKo) (Borrelia afzelii) protein is Phospho-N-acetylmuramoyl-pentapeptide-transferase.